The following is a 1098-amino-acid chain: Probable DNA-directed RNA polymerase (1098 aa).

The span at proline 1–leucine 24 shows a compositional bias: basic and acidic residues. The tract at residues proline 1–glutamate 26 is disordered. Active-site residues include aspartate 663, lysine 750, and aspartate 915.

This sequence belongs to the phage and mitochondrial RNA polymerase family.

It localises to the mitochondrion. It catalyses the reaction RNA(n) + a ribonucleoside 5'-triphosphate = RNA(n+1) + diphosphate. DNA-dependent RNA polymerase catalyzes the transcription of DNA into RNA using the four ribonucleoside triphosphates as substrates. The chain is Probable DNA-directed RNA polymerase from Zea mays (Maize).